The following is a 329-amino-acid chain: Protein-arginine N-acetylglucosaminyltransferase NleB (329 aa).

A glycan (N-beta-linked (GlcNAc) arginine; by autocatalysis) is linked at arginine 13. 48 to 50 contacts UDP-N-acetyl-alpha-D-glucosamine; the sequence is QWF. A glycan (N-beta-linked (GlcNAc) arginine; by autocatalysis) is linked at arginine 53. Position 72 (tyrosine 72) interacts with UDP-N-acetyl-alpha-D-glucosamine. Arginine 159 carries N-beta-linked (GlcNAc) arginine; by autocatalysis glycosylation. Position 219 to 222 (219 to 222) interacts with UDP-N-acetyl-alpha-D-glucosamine; it reads YLDA. The DXD motif signature appears at 221–223; sequence DAD. Aspartate 223 serves as a coordination point for Mn(2+). The active-site Proton acceptor is the glutamate 253. N-beta-linked (GlcNAc) arginine; by autocatalysis glycosylation is present at arginine 293. 2 residues coordinate Mn(2+): asparagine 320 and serine 322. UDP-N-acetyl-alpha-D-glucosamine-binding positions include serine 322 and 327–329; that span reads SSW.

This sequence belongs to the glycosyltransferase NleB family. The cofactor is Mn(2+). Auto-glycosylated: arginine GlcNAcylation is required for activity toward death domain-containing host target proteins.

Its subcellular location is the secreted. The protein resides in the host cell. It carries out the reaction L-arginyl-[protein] + UDP-N-acetyl-alpha-D-glucosamine = N(omega)-(N-acetyl-beta-D-glucosaminyl)-L-arginyl-[protein] + UDP + H(+). Protein-arginine N-acetylglucosaminyltransferase effector that disrupts TNF signaling in infected cells, including NF-kappa-B signaling, apoptosis and necroptosis. Acts by catalyzing the transfer of a single N-acetylglucosamine (GlcNAc) to a conserved arginine residue in the death domain of host proteins FADD, TNFRSF1A and RIPK1: arginine GlcNAcylation prevents homotypic/heterotypic death domain interactions and assembly of the oligomeric TNF-alpha receptor complex, thereby disrupting TNF signaling. Has preference for host FADD as substrate compared to TNFRSF1A and RIPK1. Also acts on host proteins without a death domain: catalyzes GlcNAcylation of host GAPDH protein, thereby preventing GAPDH interaction with TRAF2 and TRAF3, leading to inhibit NF-kappa-B signaling and type I interferon production, respectively. Also displays intra-bacterial activity by mediating GlcNAcylation of glutathione synthetase GshB. Catalyzes auto-GlcNAcylation, which is required for activity toward death domain-containing host target proteins. In Citrobacter rodentium, this protein is Protein-arginine N-acetylglucosaminyltransferase NleB.